Reading from the N-terminus, the 184-residue chain is dCTP deaminase (184 aa).

107–112 (KSTYAR) is a dCTP binding site. E133 (proton donor/acceptor) is an active-site residue. DCTP-binding residues include Q152, Y166, and Q176.

It belongs to the dCTP deaminase family. In terms of assembly, homotrimer.

It carries out the reaction dCTP + H2O + H(+) = dUTP + NH4(+). It functions in the pathway pyrimidine metabolism; dUMP biosynthesis; dUMP from dCTP (dUTP route): step 1/2. In terms of biological role, catalyzes the deamination of dCTP to dUTP. The polypeptide is dCTP deaminase (Acidiphilium cryptum (strain JF-5)).